Consider the following 335-residue polypeptide: MKRIAVLTSGGDAPGMNAAIRAVVRQAISEGMEVFGIYDGYAGMVAGEIHPLDAASVGDIISRGGTFLHSARYPEFAQLEGQLKGIEQLKKHGIEGVVVIGGDGSYHGAMRLTEHGFPAIGLPGTIDNDIVGTDFTIGFDTAVTTAMDAIDKIRDTSSSHRRTFVIEVMGRNAGDIALWAGIATGADEIIIPEADFKMEDIVASIKAGYECGKKHNIIVLAEGVMSAAEFGQKLKEAGDTSDLRVTELGHIQRGGSPTARDRVLASRMGAHAVKLLKEGIGGVAVGIRNEKMVENPILGTAEEGALFSLTAEGKIVVNNPHKADIELSSLNKSLS.

Gly-11 contributes to the ATP binding site. Arg-21–Arg-25 provides a ligand contact to ADP. ATP-binding positions include Arg-72–Tyr-73 and Gly-102–Ser-105. Asp-103 provides a ligand contact to Mg(2+). Substrate is bound at residue Thr-125–Asp-127. Asp-127 serves as the catalytic Proton acceptor. Residue Arg-154 coordinates ADP. Substrate-binding positions include Arg-162 and Met-169–Arg-171. ADP contacts are provided by residues Gly-185–Asp-187 and Lys-213–His-215. Substrate is bound by residues Glu-222, Arg-244, and His-250–Arg-253.

This sequence belongs to the phosphofructokinase type A (PFKA) family. ATP-dependent PFK group I subfamily. Prokaryotic clade 'B1' sub-subfamily. Homotetramer. Requires Mg(2+) as cofactor.

The protein resides in the cytoplasm. It catalyses the reaction beta-D-fructose 6-phosphate + ATP = beta-D-fructose 1,6-bisphosphate + ADP + H(+). Its pathway is carbohydrate degradation; glycolysis; D-glyceraldehyde 3-phosphate and glycerone phosphate from D-glucose: step 3/4. Allosterically activated by ADP and other diphosphonucleosides, and allosterically inhibited by phosphoenolpyruvate. Its function is as follows. Catalyzes the phosphorylation of D-fructose 6-phosphate to fructose 1,6-bisphosphate by ATP, the first committing step of glycolysis. The protein is ATP-dependent 6-phosphofructokinase of Streptococcus pneumoniae serotype 19F (strain G54).